The chain runs to 247 residues: PHD finger protein ALFIN-LIKE 3 (247 aa).

The tract at residues 147 to 178 (DRSGVDSSGKSKHSTKRTGEGQVKRSRVVAEE) is disordered. Residues 188-240 (ETFCGTCGGLYNANEFWIGCDICERWFHGKCVRITPAKAEHIKHYKCPDCSSS) form a PHD-type zinc finger.

Belongs to the Alfin family. As to quaternary structure, interacts with H3K4me3 and to a lesser extent with H3K4me2.

It localises to the nucleus. Histone-binding component that specifically recognizes H3 tails trimethylated on 'Lys-4' (H3K4me3), which mark transcription start sites of virtually all active genes. This chain is PHD finger protein ALFIN-LIKE 3, found in Oryza sativa subsp. indica (Rice).